The sequence spans 977 residues: Ephrin type-A receptor 2 (977 aa).

An N-terminal signal peptide occupies residues 1 to 25; it reads MELRAVGFCLALLWGCALAAAAAQG. The interval 1-205 is mediates interaction with CLDN4; that stretch reads MELRAVGFCL…YYKKCPEMLQ (205 aa). Topologically, residues 26-538 are extracellular; it reads KEVVLLDFAA…STEGSANMAV (513 aa). In terms of domain architecture, Eph LBD spans 27-205; it reads EVVLLDFAAM…YYKKCPEMLQ (179 aa). 2 cysteine pairs are disulfide-bonded: C69–C187 and C104–C114. Positions 329-433 constitute a Fibronectin type-III 1 domain; the sequence is PPSAPNYLTA…TSRSFRTASV (105 aa). N-linked (GlcNAc...) asparagine glycans are attached at residues N408 and N436. A Fibronectin type-III 2 domain is found at 439–530; the sequence is EPPKVRLEDR…KVHEFQTLST (92 aa). A helical transmembrane segment spans residues 539-559; sequence IGGVAVGVVLLLVLAGVGLFI. Topologically, residues 560-977 are cytoplasmic; it reads HRRRRNLRAR…DQVNTVGIPI (418 aa). Phosphoserine occurs at positions 571 and 580. Y589 and Y595 each carry phosphotyrosine; by autocatalysis. The segment at 607 to 907 is mediates interaction with ARHGEF16; the sequence is TEIHPSCVAR…STSGSEGVPF (301 aa). Residues 614 to 876 enclose the Protein kinase domain; the sequence is VARQKVIGAG…DIVSILDKLI (263 aa). 620-628 provides a ligand contact to ATP; that stretch reads IGAGEFGEV. Y629 bears the Phosphotyrosine mark. An ATP-binding site is contributed by K647. T648 is subject to Phosphothreonine. Y736 bears the Phosphotyrosine; by autocatalysis mark. Catalysis depends on D740, which acts as the Proton acceptor. At Y773 the chain carries Phosphotyrosine; by autocatalysis. Phosphoserine is present on residues S870, S893, S898, and S902. Positions 887–977 are negatively regulates interaction with ARHGEF16; the sequence is DFDPRVSIRL…DQVNTVGIPI (91 aa). The SAM domain occupies 905 to 969; the sequence is VPFRTVSEWL…AYSLLGLKDQ (65 aa). Residue Y922 is modified to Phosphotyrosine; by autocatalysis. Y931 carries the phosphotyrosine modification. The PDZ-binding motif lies at 975–977; the sequence is IPI.

The protein belongs to the protein kinase superfamily. Tyr protein kinase family. Ephrin receptor subfamily. Homodimer. Interacts with INPPL1; regulates activated EPHA2 endocytosis and degradation. Interacts (inactivated form) with PTK2/FAK1 and interacts (EFNA1 ligand-activated form) with PTPN11; regulates integrin-mediated adhesion. Interacts with ARHGEF16, DOCK4 and ELMO2; mediates ligand-independent activation of RAC1 which stimulates cell migration. Interacts with CLDN4; phosphorylates CLDN4 and may regulate tight junctions. Interacts with ACP1. Interacts with CEMIP. Interacts with NCK1; may regulate EPHA2 activity in cell migration and adhesion. Interacts with SLA. Interacts (phosphorylated form) with VAV2, VAV3 and PI3-kinase p85 subunit (PIK3R1, PIK3R2 or PIK3R3); critical for the EFNA1-induced activation of RAC1 which stimulates cell migration. Interacts with ANKS1A. Interacts with TIMD4. Autophosphorylates. Phosphorylated at Ser-898 by PKB; serum-induced phosphorylation which targets EPHA2 to the cell leading edge and stimulates cell migration. Phosphorylation by PKB is inhibited by EFNA1-activated EPHA2 which regulates PKB activity via a reciprocal regulatory loop. Phosphorylated on tyrosine upon binding and activation by EFNA1. Phosphorylated residues Tyr-589 and Tyr-595 are required for binding VAV2 and VAV3 while phosphorylated residues Tyr-736 and Tyr-931 are required for binding PI3-kinase p85 subunit (PIK3R1, PIK3R2 or PIK3R3). These phosphorylated residues are critical for recruitment of VAV2 and VAV3 and PI3-kinase p85 subunit which transduce downstream signaling to activate RAC1 GTPase and cell migration. Dephosphorylation of Tyr-931 by PTPRF prevents the interaction of EPHA2 with NCK1. Phosphorylated at Ser-898 in response to TNF by RPS6KA1 and RPS6KA3; RPS6KA-EPHA2 signaling pathway controls cell migration. Phosphorylated at Ser-898 by PKA; blocks cell retraction induced by EPHA2 kinase activity. Dephosphorylated by ACP1. In terms of processing, ubiquitinated by CHIP/STUB1. Ubiquitination is regulated by the HSP90 chaperone and regulates the receptor stability and activity through proteasomal degradation. ANKS1A prevents ubiquitination and degradation. Expressed in the lung, intestine and liver. Expressed in myogenic progenitor cells.

The protein resides in the cell membrane. It localises to the cell projection. Its subcellular location is the ruffle membrane. It is found in the lamellipodium membrane. The protein localises to the cell junction. The protein resides in the focal adhesion. It carries out the reaction L-tyrosyl-[protein] + ATP = O-phospho-L-tyrosyl-[protein] + ADP + H(+). Functionally, receptor tyrosine kinase which binds promiscuously membrane-bound ephrin-A family ligands residing on adjacent cells, leading to contact-dependent bidirectional signaling into neighboring cells. The signaling pathway downstream of the receptor is referred to as forward signaling while the signaling pathway downstream of the ephrin ligand is referred to as reverse signaling. Activated by the ligand ephrin-A1/EFNA1 regulates migration, integrin-mediated adhesion, proliferation and differentiation of cells. Regulates cell adhesion and differentiation through DSG1/desmoglein-1 and inhibition of the ERK1/ERK2 signaling pathway. May also participate in UV radiation-induced apoptosis and have a ligand-independent stimulatory effect on chemotactic cell migration. During development, may function in distinctive aspects of pattern formation and subsequently in development of several fetal tissues. Involved for instance in angiogenesis, in early hindbrain development and epithelial proliferation and branching morphogenesis during mammary gland development. Engaged by the ligand ephrin-A5/EFNA5 may regulate lens fiber cells shape and interactions and be important for lens transparency development and maintenance. With ephrin-A2/EFNA2 may play a role in bone remodeling through regulation of osteoclastogenesis and osteoblastogenesis. In Mus musculus (Mouse), this protein is Ephrin type-A receptor 2 (Epha2).